Consider the following 380-residue polypeptide: Cytochrome b (380 aa).

4 helical membrane passes run 33-53 (FGSL…FLAM), 77-98 (WLIR…YMHI), 113-133 (WNIG…GYVL), and 178-198 (FFAF…LHLL). Heme b contacts are provided by His83 and His97. Positions 182 and 196 each coordinate heme b. His201 is a binding site for a ubiquinone. 4 consecutive transmembrane segments (helical) span residues 226 to 246 (YKDL…ALFA), 288 to 308 (LGGV…PILH), 320 to 340 (LTQF…WIGG), and 347 to 367 (FIII…VLAP).

It belongs to the cytochrome b family. The cytochrome bc1 complex contains 3 respiratory subunits (MT-CYB, CYC1 and UQCRFS1), 2 core proteins (UQCRC1 and UQCRC2) and probably 6 low-molecular weight proteins. The cofactor is heme b.

The protein localises to the mitochondrion inner membrane. In terms of biological role, component of the ubiquinol-cytochrome c reductase complex (complex III or cytochrome b-c1 complex) that is part of the mitochondrial respiratory chain. The b-c1 complex mediates electron transfer from ubiquinol to cytochrome c. Contributes to the generation of a proton gradient across the mitochondrial membrane that is then used for ATP synthesis. This is Cytochrome b (mt-cyb) from Salmo trutta (Brown trout).